Reading from the N-terminus, the 818-residue chain is Serine/threonine-protein phosphatase 4 regulatory subunit 3 (818 aa).

Residues 1–100 (MTDTRRRVKV…DEIWEKICQV (100 aa)) form the WH1 domain. Over residues 670–681 (FNTDEEDLEDGE) the composition is skewed to acidic residues. A disordered region spans residues 670-818 (FNTDEEDLED…PLSKKSKLSS (149 aa)). Positions 703–718 (FMERKKLKDSEEKEVL) are enriched in basic and acidic residues. A compositionally biased stretch (low complexity) spans 729–775 (SPSFKLSFSSSPKASLSSPPTASLHPGSPGSPSSPGTGARSSPPSAA). 2 positions are modified to phosphoserine: Ser-769 and Ser-770. The segment covering 788–803 (YPDDDEEDEDEEDADS) has biased composition (acidic residues).

It belongs to the SMEK family. Serine/threonine-protein phosphatase 4 (PP4) occurs in different assemblies of the catalytic and one or more regulatory subunits.

Functionally, regulatory subunit of serine/threonine-protein phosphatase 4. This is Serine/threonine-protein phosphatase 4 regulatory subunit 3 (smek1) from Danio rerio (Zebrafish).